Consider the following 352-residue polypeptide: N-acetyl-gamma-glutamyl-phosphate reductase (352 aa).

Residue C151 is part of the active site.

The protein belongs to the NAGSA dehydrogenase family. Type 1 subfamily.

Its subcellular location is the cytoplasm. It catalyses the reaction N-acetyl-L-glutamate 5-semialdehyde + phosphate + NADP(+) = N-acetyl-L-glutamyl 5-phosphate + NADPH + H(+). It participates in amino-acid biosynthesis; L-arginine biosynthesis; N(2)-acetyl-L-ornithine from L-glutamate: step 3/4. Functionally, catalyzes the NADPH-dependent reduction of N-acetyl-5-glutamyl phosphate to yield N-acetyl-L-glutamate 5-semialdehyde. In Renibacterium salmoninarum (strain ATCC 33209 / DSM 20767 / JCM 11484 / NBRC 15589 / NCIMB 2235), this protein is N-acetyl-gamma-glutamyl-phosphate reductase.